The following is a 258-amino-acid chain: MSFIKPIYQDINSILIGQKVKRPKSGTLSGHAAGEPFEKLVYKFLKENLSDLTFKQYEYLNDLFMKKPAIIGHEARYKLFNSPTLLFLLSRGKAATENWSIENLFEEKQNDTADILLVKDQFYELLDVKTRNISKSAQAPNIISAYKLAQTCAKMIDNKEFDLFDINYLEVDWELNGEDLVCVSTSFAELFKSEPSELYINWAAAMQIQFHVRDLDQGFNGTREEWAKSYLKHFVTQAEQRAISMIDKFVKPFKKYIL.

It carries out the reaction Endonucleolytic cleavage of DNA to give specific double-stranded fragments with terminal 5'-phosphates.. Its function is as follows. A P subtype restriction enzyme that recognizes the double-stranded sequence 5'-GTYRAC-3' and cleaves after Y-3. The sequence is that of Type II restriction enzyme HindII (hindIIR) from Haemophilus influenzae (strain ATCC 51907 / DSM 11121 / KW20 / Rd).